A 954-amino-acid polypeptide reads, in one-letter code: Glycine dehydrogenase (decarboxylating) (954 aa).

The residue at position 704 (K704) is an N6-(pyridoxal phosphate)lysine.

It belongs to the GcvP family. In terms of assembly, the glycine cleavage system is composed of four proteins: P, T, L and H. Requires pyridoxal 5'-phosphate as cofactor.

The catalysed reaction is N(6)-[(R)-lipoyl]-L-lysyl-[glycine-cleavage complex H protein] + glycine + H(+) = N(6)-[(R)-S(8)-aminomethyldihydrolipoyl]-L-lysyl-[glycine-cleavage complex H protein] + CO2. Its function is as follows. The glycine cleavage system catalyzes the degradation of glycine. The P protein binds the alpha-amino group of glycine through its pyridoxal phosphate cofactor; CO(2) is released and the remaining methylamine moiety is then transferred to the lipoamide cofactor of the H protein. This is Glycine dehydrogenase (decarboxylating) from Allorhizobium ampelinum (strain ATCC BAA-846 / DSM 112012 / S4) (Agrobacterium vitis (strain S4)).